Consider the following 127-residue polypeptide: Modulator protein MzrA (127 aa).

Residues 1–10 (MQIPRMSLRQ) are Cytoplasmic-facing. The helical transmembrane segment at 11 to 31 (LAWSGAVLLLVGTLLLAWSAV) threads the bilayer. Residues 32–127 (RQQESTLAIR…RLRDNSHRFG (96 aa)) lie on the Periplasmic side of the membrane.

Belongs to the MzrA family. As to quaternary structure, interacts with EnvZ.

Its subcellular location is the cell inner membrane. Its function is as follows. Modulates the activity of the EnvZ/OmpR two-component regulatory system, probably by directly modulating EnvZ enzymatic activity and increasing stability of phosphorylated OmpR. Links the two-component systems CpxA/CpxR and EnvZ/OmpR. The chain is Modulator protein MzrA from Escherichia coli (strain K12).